We begin with the raw amino-acid sequence, 133 residues long: Ribonuclease P protein component (133 aa).

A disordered region spans residues 114–133; it reads RSRPTPEEKSEPAGVDSTDA.

The protein belongs to the RnpA family. Consists of a catalytic RNA component (M1 or rnpB) and a protein subunit.

The enzyme catalyses Endonucleolytic cleavage of RNA, removing 5'-extranucleotides from tRNA precursor.. Functionally, RNaseP catalyzes the removal of the 5'-leader sequence from pre-tRNA to produce the mature 5'-terminus. It can also cleave other RNA substrates such as 4.5S RNA. The protein component plays an auxiliary but essential role in vivo by binding to the 5'-leader sequence and broadening the substrate specificity of the ribozyme. The sequence is that of Ribonuclease P protein component from Pseudomonas syringae pv. tomato (strain ATCC BAA-871 / DC3000).